The chain runs to 232 residues: MASFLKKTMPFKTTIEGTVNGHYFKCTGKGEGNPFEGTQEMKIEVIEGGPLPFAFHILSTSCMYGSKTFIKYVSGIPDYFKQSFPEGFTWERTTTYEDGGFLTAHQDTSLDGDCLVYKVKILGNNFPADGPVMQNKAGRWEPATEIVYEVDGVLRGQSLMALKCPGGRHLTCHLHTTYRSKKPASALKMPGFHFEDHRIEIMEEVEKGKCYKQYEAAVGRYCDAAPSKLGHN.

A cross-link (2-iminomethyl-5-imidazolinone (Met-Gly)) is located at residues 63 to 65 (MYG). Residue Y64 is modified to (E)-2,3-didehydrotyrosine.

It belongs to the GFP family. Contains a chromophore consisting of modified amino acid residues. The chromophore is formed by autocatalytic backbone condensation between Xaa-N and Gly-(N+2), oxidation of Tyr-(N+1) to didehydrotyrosine, and formation of a double bond to the alpha-amino nitrogen of residue Tyr-(N+1). Maturation of the chromophore requires nothing other than molecular oxygen. Tentacle tips.

Its function is as follows. Pigment protein that is intensely purple in color. This chain is GFP-like non-fluorescent chromoprotein FP595, found in Anemonia sulcata (Mediterranean snakelocks sea anemone).